The primary structure comprises 311 residues: Porphobilinogen deaminase (311 aa).

Cys242 carries the S-(dipyrrolylmethanemethyl)cysteine modification.

It belongs to the HMBS family. Monomer. The cofactor is dipyrromethane.

It catalyses the reaction 4 porphobilinogen + H2O = hydroxymethylbilane + 4 NH4(+). Its pathway is porphyrin-containing compound metabolism; protoporphyrin-IX biosynthesis; coproporphyrinogen-III from 5-aminolevulinate: step 2/4. Functionally, tetrapolymerization of the monopyrrole PBG into the hydroxymethylbilane pre-uroporphyrinogen in several discrete steps. This chain is Porphobilinogen deaminase (hemC), found in Neisseria meningitidis serogroup B (strain ATCC BAA-335 / MC58).